We begin with the raw amino-acid sequence, 577 residues long: Putative pseudouridine synthase B0024.11 (577 aa).

Aspartate 188 acts as the Nucleophile in catalysis. Residues 265-472 (GFINYFGTQR…GESSRCLFVE (208 aa)) enclose the TRUD domain. Residues 538–565 (KAMRDASFKTRGDDEKTEENVLEEKGSD) are compositionally biased toward basic and acidic residues. Positions 538 to 577 (KAMRDASFKTRGDDEKTEENVLEEKGSDDANELNLVSEDQ) are disordered.

The protein belongs to the pseudouridine synthase TruD family.

The catalysed reaction is a uridine in tRNA = a pseudouridine in tRNA. In Caenorhabditis elegans, this protein is Putative pseudouridine synthase B0024.11.